The primary structure comprises 53 residues: uncharacterized protein (53 aa).

This is an uncharacterized protein from Homo sapiens (Human).